Here is a 321-residue protein sequence, read N- to C-terminus: Glucokinase (321 aa).

8–13 (GDVGGT) lines the ATP pocket.

It belongs to the bacterial glucokinase family.

Its subcellular location is the cytoplasm. The enzyme catalyses D-glucose + ATP = D-glucose 6-phosphate + ADP + H(+). This is Glucokinase from Salmonella typhi.